A 158-amino-acid chain; its full sequence is MRFKNRLFWIAAFIAFFVDQLTKYWVVQTFSLGETLPILPGIFHFTYVTNTGAAFSLFSGKVEWLRWLSLGVSLLLIGLALLGPVLERWDQLGYGLILGGAMGNGIDRFALGYVVDFLDFRLINFAVFNMADSFISIGIVCLLLASLQKSPDSHHRSR.

4 helical membrane-spanning segments follow: residues 7–27 (LFWI…YWVV), 38–58 (ILPG…FSLF), 67–87 (WLSL…PVLE), and 95–115 (GLIL…GYVV). Active-site residues include Asp-116 and Asp-132. Residues 125-145 (FAVFNMADSFISIGIVCLLLA) traverse the membrane as a helical segment.

The protein belongs to the peptidase A8 family.

Its subcellular location is the cell inner membrane. It catalyses the reaction Release of signal peptides from bacterial membrane prolipoproteins. Hydrolyzes -Xaa-Yaa-Zaa-|-(S,diacylglyceryl)Cys-, in which Xaa is hydrophobic (preferably Leu), and Yaa (Ala or Ser) and Zaa (Gly or Ala) have small, neutral side chains.. The protein operates within protein modification; lipoprotein biosynthesis (signal peptide cleavage). Its function is as follows. This protein specifically catalyzes the removal of signal peptides from prolipoproteins. This chain is Lipoprotein signal peptidase, found in Trichormus variabilis (strain ATCC 29413 / PCC 7937) (Anabaena variabilis).